Reading from the N-terminus, the 771-residue chain is Tetratricopeptide repeat-containing protein trd-1 (771 aa).

6 TPR repeats span residues 389-415 (LEMW…IRRL), 416-449 (IEQK…SDDR), 451-484 (ARAH…QPIQ), 485-518 (LGTW…QPDH), 520-552 (EAWN…NYEH), and 553-586 (PNVW…NKRG).

It belongs to the TTC27 family. In terms of tissue distribution, expressed in the spermatheca.

It localises to the cytoplasm. Functionally, developmental protein required for cell fate determination in both the germline and seam cells of the developing epidermis. Specifically, involved in sex determination and may function in parallel or downstream of other sex determination factors, including tra-2 and fem-3, to promote oogenesis in its role in the regulation of the switch from spermatogenesis to oogenesis in the gonads. Also implicated in the mitosis to meiosis switch in distal tip cells. The sequence is that of Tetratricopeptide repeat-containing protein trd-1 from Caenorhabditis elegans.